The primary structure comprises 254 residues: Dihydroorotate dehydrogenase B (NAD(+)), electron transfer subunit (254 aa).

Residues 1 to 99 (MLQTEMKVIQ…LGPLGKGFDI (99 aa)) enclose the FAD-binding FR-type domain. FAD-binding positions include 50 to 53 (RPIS), 67 to 69 (LYR), and 74 to 75 (GT). Positions 218, 223, 226, and 241 each coordinate [2Fe-2S] cluster.

Belongs to the PyrK family. As to quaternary structure, heterotetramer of 2 PyrK and 2 PyrD type B subunits. Requires [2Fe-2S] cluster as cofactor. The cofactor is FAD.

The protein operates within pyrimidine metabolism; UMP biosynthesis via de novo pathway; orotate from (S)-dihydroorotate (NAD(+) route): step 1/1. Functionally, responsible for channeling the electrons from the oxidation of dihydroorotate from the FMN redox center in the PyrD type B subunit to the ultimate electron acceptor NAD(+). This is Dihydroorotate dehydrogenase B (NAD(+)), electron transfer subunit from Listeria monocytogenes serotype 4b (strain F2365).